Reading from the N-terminus, the 216-residue chain is Probable transaldolase (216 aa).

Lys83 (schiff-base intermediate with substrate) is an active-site residue.

The protein belongs to the transaldolase family. Type 3B subfamily.

It localises to the cytoplasm. It catalyses the reaction D-sedoheptulose 7-phosphate + D-glyceraldehyde 3-phosphate = D-erythrose 4-phosphate + beta-D-fructose 6-phosphate. The protein operates within carbohydrate degradation; pentose phosphate pathway; D-glyceraldehyde 3-phosphate and beta-D-fructose 6-phosphate from D-ribose 5-phosphate and D-xylulose 5-phosphate (non-oxidative stage): step 2/3. In terms of biological role, transaldolase is important for the balance of metabolites in the pentose-phosphate pathway. This is Probable transaldolase from Hyphomonas neptunium (strain ATCC 15444).